Consider the following 390-residue polypeptide: Dual-specificity RNA methyltransferase RlmN (390 aa).

Glu-126 acts as the Proton acceptor in catalysis. The region spanning 134 to 374 (TEDRGAVCLS…APVRTPRGQD (241 aa)) is the Radical SAM core domain. Cys-141 and Cys-379 are disulfide-bonded. [4Fe-4S] cluster is bound by residues Cys-148, Cys-152, and Cys-155. S-adenosyl-L-methionine is bound by residues 205–206 (GE), Ser-237, 259–261 (SLH), and Asn-336. The active-site S-methylcysteine intermediate is the Cys-379.

Belongs to the radical SAM superfamily. RlmN family. [4Fe-4S] cluster serves as cofactor.

Its subcellular location is the cytoplasm. It carries out the reaction adenosine(2503) in 23S rRNA + 2 reduced [2Fe-2S]-[ferredoxin] + 2 S-adenosyl-L-methionine = 2-methyladenosine(2503) in 23S rRNA + 5'-deoxyadenosine + L-methionine + 2 oxidized [2Fe-2S]-[ferredoxin] + S-adenosyl-L-homocysteine. It catalyses the reaction adenosine(37) in tRNA + 2 reduced [2Fe-2S]-[ferredoxin] + 2 S-adenosyl-L-methionine = 2-methyladenosine(37) in tRNA + 5'-deoxyadenosine + L-methionine + 2 oxidized [2Fe-2S]-[ferredoxin] + S-adenosyl-L-homocysteine. Its function is as follows. Specifically methylates position 2 of adenine 2503 in 23S rRNA and position 2 of adenine 37 in tRNAs. m2A2503 modification seems to play a crucial role in the proofreading step occurring at the peptidyl transferase center and thus would serve to optimize ribosomal fidelity. This Acidiphilium cryptum (strain JF-5) protein is Dual-specificity RNA methyltransferase RlmN.